The following is a 45-amino-acid chain: Large ribosomal subunit protein bL34 (45 aa).

The interval 1 to 24 (MTKRTFGGTSRKRKRVSGFRVRMR) is disordered. Over residues 10–24 (SRKRKRVSGFRVRMR) the composition is skewed to basic residues.

It belongs to the bacterial ribosomal protein bL34 family.

The sequence is that of Large ribosomal subunit protein bL34 from Prochlorococcus marinus (strain MIT 9303).